The sequence spans 302 residues: HPr kinase/phosphorylase (302 aa).

Active-site residues include H136 and K157. 151–158 (GESGIGKS) provides a ligand contact to ATP. A Mg(2+)-binding site is contributed by S158. The active-site Proton acceptor; for phosphorylation activity. Proton donor; for dephosphorylation activity is the D175. The segment at 198-207 (LEVRGLGIID) is important for the catalytic mechanism of both phosphorylation and dephosphorylation. E199 serves as a coordination point for Mg(2+). The active site involves R240. The interval 261-266 (PIRPGR) is important for the catalytic mechanism of dephosphorylation.

This sequence belongs to the HPrK/P family. As to quaternary structure, homohexamer. Mg(2+) is required as a cofactor.

It carries out the reaction [HPr protein]-L-serine + ATP = [HPr protein]-O-phospho-L-serine + ADP + H(+). The enzyme catalyses [HPr protein]-O-phospho-L-serine + phosphate + H(+) = [HPr protein]-L-serine + diphosphate. Its function is as follows. Catalyzes the ATP- as well as the pyrophosphate-dependent phosphorylation of a specific serine residue in HPr, a phosphocarrier protein of the phosphoenolpyruvate-dependent sugar phosphotransferase system (PTS). HprK/P also catalyzes the pyrophosphate-producing, inorganic phosphate-dependent dephosphorylation (phosphorolysis) of seryl-phosphorylated HPr (P-Ser-HPr). The two antagonistic activities of HprK/P are regulated by several intracellular metabolites, which change their concentration in response to the absence or presence of rapidly metabolisable carbon sources (glucose, fructose, etc.) in the growth medium. Therefore, by controlling the phosphorylation state of HPr, HPrK/P is a sensor enzyme that plays a major role in the regulation of carbon metabolism and sugar transport: it mediates carbon catabolite repression (CCR), and regulates PTS-catalyzed carbohydrate uptake and inducer exclusion. This Clostridium beijerinckii (strain ATCC 51743 / NCIMB 8052) (Clostridium acetobutylicum) protein is HPr kinase/phosphorylase.